Here is a 135-residue protein sequence, read N- to C-terminus: MAEKFDHLEEHLEKFVENIRQLGIIVSDFQPSSQAGLNQKLNFIVTGLQDIDKCRQQLHDITVPLEVFEYIDQGRNPQLYTKECLERALAKNEQVKGKIDTMKKFKSLLIQELSKVFPEDMAKYRSIRGEDHPPS.

This sequence belongs to the Mediator complex subunit 10 family. Component of the Mediator complex, which is composed of MED1, MED4, MED6, MED7, MED8, MED9, MED10, MED11, MED12, MED13, MED13L, MED14, MED15, MED16, MED17, MED18, MED19, MED20, MED21, MED22, MED23, MED24, MED25, MED26, MED27, MED29, MED30, MED31, CCNC, CDK8 and CDC2L6/CDK11. The MED12, MED13, CCNC and CDK8 subunits form a distinct module termed the CDK8 module. Mediator containing the CDK8 module is less active than Mediator lacking this module in supporting transcriptional activation. Individual preparations of the Mediator complex lacking one or more distinct subunits have been variously termed ARC, CRSP, DRIP, PC2, SMCC and TRAP.

The protein resides in the nucleus. Its function is as follows. Component of the Mediator complex, a coactivator involved in the regulated transcription of nearly all RNA polymerase II-dependent genes. Mediator functions as a bridge to convey information from gene-specific regulatory proteins to the basal RNA polymerase II transcription machinery. Mediator is recruited to promoters by direct interactions with regulatory proteins and serves as a scaffold for the assembly of a functional preinitiation complex with RNA polymerase II and the general transcription factors. The sequence is that of Mediator of RNA polymerase II transcription subunit 10 (MED10) from Homo sapiens (Human).